We begin with the raw amino-acid sequence, 529 residues long: uncharacterized protein (529 aa).

One can recognise a Radical SAM core domain in the interval 157–410 (DFPHIICEIE…FKNRVRENID (254 aa)). The [4Fe-4S] cluster site is built by cysteine 171, cysteine 176, and cysteine 179.

[4Fe-4S] cluster is required as a cofactor.

This is an uncharacterized protein from Archaeoglobus fulgidus (strain ATCC 49558 / DSM 4304 / JCM 9628 / NBRC 100126 / VC-16).